The following is a 346-amino-acid chain: F(420)H(2) dehydrogenase subunit F (346 aa).

4Fe-4S ferredoxin-type domains follow at residues 5 to 34 and 46 to 76; these read IAEVIQHDVCAACGACEAVCPIGAVTVKKA and YEKGAAFQVCEGCLTCSRICPVVDGFIENEL. Cysteine 14, cysteine 17, cysteine 20, cysteine 24, cysteine 55, cysteine 58, cysteine 61, and cysteine 65 together coordinate [4Fe-4S] cluster.

The FPO complex is composed of at least 13 different subunits. It depends on [4Fe-4S] cluster as a cofactor. FAD is required as a cofactor.

The protein resides in the membrane. Its subcellular location is the cytoplasm. It carries out the reaction methanophenazine + reduced coenzyme F420-(gamma-L-Glu)(n) = dihydromethanophenazine + oxidized coenzyme F420-(gamma-L-Glu)(n) + H(+). It catalyses the reaction reduced coenzyme F420-(gamma-L-Glu)(n) + 2 oxidized [2Fe-2S]-[ferredoxin] = oxidized coenzyme F420-(gamma-L-Glu)(n) + 2 reduced [2Fe-2S]-[ferredoxin] + 3 H(+). Its function is as follows. Component of the F(420)H(2) dehydrogenase (FPO complex) which is part of the energy-conserving F(420)H(2):heterodisulfide oxidoreductase system. The membrane-bound electron transfer system of the complex plays an important role in the metabolism of methylotrophic methanogens when the organisms grow on methanol or methylamines. Catalyzes the oxidation of methanophenazine to dihydromethanophenazine. It shuttles electrons from F(420)H(2), via FAD and iron-sulfur (Fe-S) centers, to methanophenazine (an electron carrier in the membrane). It couples the redox reaction to proton translocation (for every two electrons transferred, two hydrogen ions are translocated across the cytoplasmic membrane), and thus conserves the redox energy in a proton gradient. It also catalyzes the oxidation of F(420)H(2) with quinones such as 2,3-dimethyl-1,4-naphthoquinone, 2-methyl-1,4-naphthoquinone and tetramethyl-p-benzoquinone. Might have a dual function, acting as an electron input module when connected to the membrane integral Fpo complex, or as a soluble single subunit, being involved in the reoxydation of reduced ferredoxin in the cytoplasm. This chain is F(420)H(2) dehydrogenase subunit F (fpoF), found in Methanosarcina mazei (strain ATCC BAA-159 / DSM 3647 / Goe1 / Go1 / JCM 11833 / OCM 88) (Methanosarcina frisia).